Reading from the N-terminus, the 427-residue chain is Glutamate-1-semialdehyde 2,1-aminomutase (427 aa).

Lys265 carries the N6-(pyridoxal phosphate)lysine modification.

The protein belongs to the class-III pyridoxal-phosphate-dependent aminotransferase family. HemL subfamily. As to quaternary structure, homodimer. It depends on pyridoxal 5'-phosphate as a cofactor.

Its subcellular location is the cytoplasm. It catalyses the reaction (S)-4-amino-5-oxopentanoate = 5-aminolevulinate. Its pathway is porphyrin-containing compound metabolism; protoporphyrin-IX biosynthesis; 5-aminolevulinate from L-glutamyl-tRNA(Glu): step 2/2. The protein is Glutamate-1-semialdehyde 2,1-aminomutase of Teredinibacter turnerae (strain ATCC 39867 / T7901).